Consider the following 444-residue polypeptide: Probable glycine dehydrogenase (decarboxylating) subunit 1 (444 aa).

Belongs to the GcvP family. N-terminal subunit subfamily. The glycine cleavage system is composed of four proteins: P, T, L and H. In this organism, the P 'protein' is a heterodimer of two subunits.

It carries out the reaction N(6)-[(R)-lipoyl]-L-lysyl-[glycine-cleavage complex H protein] + glycine + H(+) = N(6)-[(R)-S(8)-aminomethyldihydrolipoyl]-L-lysyl-[glycine-cleavage complex H protein] + CO2. Functionally, the glycine cleavage system catalyzes the degradation of glycine. The P protein binds the alpha-amino group of glycine through its pyridoxal phosphate cofactor; CO(2) is released and the remaining methylamine moiety is then transferred to the lipoamide cofactor of the H protein. The protein is Probable glycine dehydrogenase (decarboxylating) subunit 1 of Chlorobaculum tepidum (strain ATCC 49652 / DSM 12025 / NBRC 103806 / TLS) (Chlorobium tepidum).